Consider the following 559-residue polypeptide: Formate--tetrahydrofolate ligase (559 aa).

An ATP-binding site is contributed by 68–75 (TPAGEGKT).

The protein belongs to the formate--tetrahydrofolate ligase family.

It catalyses the reaction (6S)-5,6,7,8-tetrahydrofolate + formate + ATP = (6R)-10-formyltetrahydrofolate + ADP + phosphate. It participates in one-carbon metabolism; tetrahydrofolate interconversion. The protein is Formate--tetrahydrofolate ligase of Mesorhizobium japonicum (strain LMG 29417 / CECT 9101 / MAFF 303099) (Mesorhizobium loti (strain MAFF 303099)).